Here is a 210-residue protein sequence, read N- to C-terminus: Uracil phosphoribosyltransferase (210 aa).

5-phospho-alpha-D-ribose 1-diphosphate is bound by residues Arg78, Arg103, and 130–138; that span reads DPMLATGGS. Uracil contacts are provided by residues Ile193 and 198-200; that span reads GDA. Asp199 contributes to the 5-phospho-alpha-D-ribose 1-diphosphate binding site.

This sequence belongs to the UPRTase family. It depends on Mg(2+) as a cofactor.

It carries out the reaction UMP + diphosphate = 5-phospho-alpha-D-ribose 1-diphosphate + uracil. It participates in pyrimidine metabolism; UMP biosynthesis via salvage pathway; UMP from uracil: step 1/1. Its activity is regulated as follows. Allosterically activated by GTP. Catalyzes the conversion of uracil and 5-phospho-alpha-D-ribose 1-diphosphate (PRPP) to UMP and diphosphate. This chain is Uracil phosphoribosyltransferase, found in Chromobacterium violaceum (strain ATCC 12472 / DSM 30191 / JCM 1249 / CCUG 213 / NBRC 12614 / NCIMB 9131 / NCTC 9757 / MK).